The sequence spans 364 residues: Developmentally-regulated GTP-binding protein 2 (364 aa).

The residue at position 21 (Lys21) is a (3S)-3-hydroxylysine. The OBG-type G domain maps to 63–288 (ARVALIGFPS…LLEMLWEYLA (226 aa)). Residues 69-76 (GFPSVGKS), 94-98 (FTTLT), 115-118 (DLPG), 246-249 (NKID), and 269-271 (SCG) contribute to the GTP site. Positions 76 and 96 each coordinate Mg(2+). The region spanning 288–363 (ALTCIYTKKR…EHEDVIQIVK (76 aa)) is the TGS domain.

The protein belongs to the TRAFAC class OBG-HflX-like GTPase superfamily. OBG GTPase family. In terms of assembly, interacts with RWDD1; this interaction confers protection to polyubiquitination and proteolytic degradation. Interacts with JMJD7; this interaction is direct. Mg(2+) serves as cofactor. In terms of processing, polyubiquitinated. Post-translationally, hydroxylated (with S stereochemistry) at C-3 of Lys-21 by JMJD7.

It localises to the nucleus. It is found in the cytoplasm. It catalyses the reaction GTP + H2O = GDP + phosphate + H(+). In terms of biological role, catalyzes the conversion of GTP to GDP through hydrolysis of the gamma-phosphate bond in GTP. When hydroxylated at C-3 of 'Lys-21' by JMJD7, may bind to RNA and play a role in translation. The protein is Developmentally-regulated GTP-binding protein 2 (DRG2) of Bos taurus (Bovine).